Here is a 338-residue protein sequence, read N- to C-terminus: Anthranilate phosphoribosyltransferase (338 aa).

Residues G81, 84-85, S89, 91-94, 109-117, and A121 each bind 5-phospho-alpha-D-ribose 1-diphosphate; these read GD, NVST, and KHGNRALSS. Residue G81 coordinates anthranilate. S93 provides a ligand contact to Mg(2+). N112 is a binding site for anthranilate. R167 serves as a coordination point for anthranilate. Residues D226 and E227 each coordinate Mg(2+).

It belongs to the anthranilate phosphoribosyltransferase family. As to quaternary structure, homodimer. It depends on Mg(2+) as a cofactor.

The enzyme catalyses N-(5-phospho-beta-D-ribosyl)anthranilate + diphosphate = 5-phospho-alpha-D-ribose 1-diphosphate + anthranilate. It functions in the pathway amino-acid biosynthesis; L-tryptophan biosynthesis; L-tryptophan from chorismate: step 2/5. Functionally, catalyzes the transfer of the phosphoribosyl group of 5-phosphorylribose-1-pyrophosphate (PRPP) to anthranilate to yield N-(5'-phosphoribosyl)-anthranilate (PRA). In Rhodopseudomonas palustris (strain HaA2), this protein is Anthranilate phosphoribosyltransferase.